The primary structure comprises 468 residues: Glutamate--tRNA ligase (468 aa).

Residues 12–22 (PSPTGMMHIGT) carry the 'HIGH' region motif. A 'KMSKS' region motif is present at residues 238 to 242 (KLSKR). K241 provides a ligand contact to ATP.

The protein belongs to the class-I aminoacyl-tRNA synthetase family. Glutamate--tRNA ligase type 1 subfamily. As to quaternary structure, monomer.

The protein resides in the cytoplasm. It carries out the reaction tRNA(Glu) + L-glutamate + ATP = L-glutamyl-tRNA(Glu) + AMP + diphosphate. Catalyzes the attachment of glutamate to tRNA(Glu) in a two-step reaction: glutamate is first activated by ATP to form Glu-AMP and then transferred to the acceptor end of tRNA(Glu). The chain is Glutamate--tRNA ligase from Phenylobacterium zucineum (strain HLK1).